The sequence spans 286 residues: Shikimate dehydrogenase (NADP(+)) (286 aa).

Shikimate contacts are provided by residues 25–27 (SLS) and threonine 72. The active-site Proton acceptor is lysine 76. Glutamate 88 lines the NADP(+) pocket. Residues asparagine 97 and aspartate 113 each coordinate shikimate. NADP(+) contacts are provided by residues 138–142 (GSGGA), 162–167 (NRTIER), and isoleucine 232. Tyrosine 234 serves as a coordination point for shikimate. Residue glycine 255 participates in NADP(+) binding.

The protein belongs to the shikimate dehydrogenase family. As to quaternary structure, homodimer.

It catalyses the reaction shikimate + NADP(+) = 3-dehydroshikimate + NADPH + H(+). It participates in metabolic intermediate biosynthesis; chorismate biosynthesis; chorismate from D-erythrose 4-phosphate and phosphoenolpyruvate: step 4/7. Functionally, involved in the biosynthesis of the chorismate, which leads to the biosynthesis of aromatic amino acids. Catalyzes the reversible NADPH linked reduction of 3-dehydroshikimate (DHSA) to yield shikimate (SA). The chain is Shikimate dehydrogenase (NADP(+)) from Magnetococcus marinus (strain ATCC BAA-1437 / JCM 17883 / MC-1).